Reading from the N-terminus, the 227-residue chain is Ribose-5-phosphate isomerase A (227 aa).

Substrate contacts are provided by residues Thr-26–Thr-29, Asp-82–Asp-85, and Lys-95–Gly-98. Glu-104 acts as the Proton acceptor in catalysis. Lys-122 lines the substrate pocket.

Belongs to the ribose 5-phosphate isomerase family. Homodimer.

The catalysed reaction is aldehydo-D-ribose 5-phosphate = D-ribulose 5-phosphate. The protein operates within carbohydrate degradation; pentose phosphate pathway; D-ribose 5-phosphate from D-ribulose 5-phosphate (non-oxidative stage): step 1/1. Catalyzes the reversible conversion of ribose-5-phosphate to ribulose 5-phosphate. The protein is Ribose-5-phosphate isomerase A of Streptococcus pyogenes serotype M28 (strain MGAS6180).